The following is a 133-amino-acid chain: Small ribosomal subunit protein mS23 (133 aa).

It belongs to the mitochondrion-specific ribosomal protein mS23 family. As to quaternary structure, component of the mitochondrial ribosome small subunit (28S) which comprises a 12S rRNA and about 30 distinct proteins.

The protein localises to the mitochondrion. This is Small ribosomal subunit protein mS23 (mrps-23) from Caenorhabditis elegans.